A 103-amino-acid polypeptide reads, in one-letter code: MNVTLTKAELADLLFERVGLNKREAKDMVEGFFEEIRTALERGDSVKLSGFGNFQLRDKPQRPGRNPKTGEEIPITARRVVTFHASQKLKAAVEQLSDASKQP.

Residues 51 to 73 (FGNFQLRDKPQRPGRNPKTGEEI) form a disordered region.

It belongs to the bacterial histone-like protein family. In terms of assembly, heterodimer of an alpha and a beta chain.

In terms of biological role, this protein is one of the two subunits of integration host factor, a specific DNA-binding protein that functions in genetic recombination as well as in transcriptional and translational control. This is Integration host factor subunit alpha from Azoarcus sp. (strain BH72).